Here is a 385-residue protein sequence, read N- to C-terminus: L-arabinitol 4-dehydrogenase (385 aa).

Residues Cys-54, His-79, Glu-80, Cys-109, Cys-112, Cys-115, Cys-123, and Glu-164 each coordinate Zn(2+). NAD(+) contacts are provided by residues 191-192, Asp-212, Arg-217, Ile-292, and 316-318; these read PI and QYR.

Belongs to the zinc-containing alcohol dehydrogenase family. Homotetramer. Zn(2+) is required as a cofactor.

The catalysed reaction is L-arabinitol + NAD(+) = L-xylulose + NADH + H(+). The protein operates within carbohydrate degradation; L-arabinose degradation via L-arabinitol; D-xylulose 5-phosphate from L-arabinose (fungal route): step 2/5. In terms of biological role, catalyzes the NAD-dependent oxidation of L-arabinitol to L-xylulose in the fungal L-arabinose catabolic pathway. L-arabinose catabolism is important for using plant material as a carbon source. NADP cannot act as a cosubstrate. The chain is L-arabinitol 4-dehydrogenase (lad1) from Penicillium rubens (strain ATCC 28089 / DSM 1075 / NRRL 1951 / Wisconsin 54-1255) (Penicillium chrysogenum).